We begin with the raw amino-acid sequence, 664 residues long: tRNA uridine 5-carboxymethylaminomethyl modification enzyme MnmG (664 aa).

Residues 14–19, valine 126, and serine 183 each bind FAD; that span reads GGGHSG. Position 277-291 (277-291) interacts with NAD(+); it reads GPRYCPSIEDKIDRF. Glutamine 374 contacts FAD.

The protein belongs to the MnmG family. As to quaternary structure, homodimer. Heterotetramer of two MnmE and two MnmG subunits. Requires FAD as cofactor.

It is found in the cytoplasm. In terms of biological role, NAD-binding protein involved in the addition of a carboxymethylaminomethyl (cmnm) group at the wobble position (U34) of certain tRNAs, forming tRNA-cmnm(5)s(2)U34. This Salinibacter ruber (strain DSM 13855 / M31) protein is tRNA uridine 5-carboxymethylaminomethyl modification enzyme MnmG.